Here is a 294-residue protein sequence, read N- to C-terminus: Cytidine deaminase (294 aa).

2 consecutive CMP/dCMP-type deaminase domains span residues 48–168 (DEDA…FGPK) and 186–294 (LTGD…VLLG). 89–91 (NME) contacts substrate. A Zn(2+)-binding site is contributed by His-102. The active-site Proton donor is Glu-104. 2 residues coordinate Zn(2+): Cys-129 and Cys-132.

This sequence belongs to the cytidine and deoxycytidylate deaminase family. As to quaternary structure, homodimer. It depends on Zn(2+) as a cofactor.

The enzyme catalyses cytidine + H2O + H(+) = uridine + NH4(+). It carries out the reaction 2'-deoxycytidine + H2O + H(+) = 2'-deoxyuridine + NH4(+). This enzyme scavenges exogenous and endogenous cytidine and 2'-deoxycytidine for UMP synthesis. This is Cytidine deaminase from Salmonella newport (strain SL254).